We begin with the raw amino-acid sequence, 552 residues long: Chaperonin GroEL (552 aa).

ATP contacts are provided by residues 30-33 (TLGP), Lys-51, 87-91 (DGTTT), Gly-415, 480-482 (NAA), and Asp-496.

This sequence belongs to the chaperonin (HSP60) family. Forms a cylinder of 14 subunits composed of two heptameric rings stacked back-to-back. Interacts with the co-chaperonin GroES.

It is found in the cytoplasm. The catalysed reaction is ATP + H2O + a folded polypeptide = ADP + phosphate + an unfolded polypeptide.. Functionally, together with its co-chaperonin GroES, plays an essential role in assisting protein folding. The GroEL-GroES system forms a nano-cage that allows encapsulation of the non-native substrate proteins and provides a physical environment optimized to promote and accelerate protein folding. The sequence is that of Chaperonin GroEL from Coxiella burnetii (strain RSA 493 / Nine Mile phase I).